The primary structure comprises 138 residues: Transcription antitermination protein NusB (138 aa).

This sequence belongs to the NusB family.

Involved in transcription antitermination. Required for transcription of ribosomal RNA (rRNA) genes. Binds specifically to the boxA antiterminator sequence of the ribosomal RNA (rrn) operons. The sequence is that of Transcription antitermination protein NusB from Photorhabdus laumondii subsp. laumondii (strain DSM 15139 / CIP 105565 / TT01) (Photorhabdus luminescens subsp. laumondii).